Reading from the N-terminus, the 728-residue chain is Probable subtilase-type serine protease DR_A0283 (728 aa).

The first 22 residues, 1–22 (MPGALPMKKISLAVLSLTTLLA), serve as a signal peptide directing secretion. Positions 23–148 (ACGQPQTSPQ…RTAQDQLGAQ (126 aa)) are excised as a propeptide. Positions 159–471 (QYALDSNHLH…YGLIRMDKLA (313 aa)) constitute a Peptidase S8 domain. Residues Asp188, His242, and Ser412 each act as charge relay system in the active site.

The protein belongs to the peptidase S8 family.

Its subcellular location is the secreted. The sequence is that of Probable subtilase-type serine protease DR_A0283 from Deinococcus radiodurans (strain ATCC 13939 / DSM 20539 / JCM 16871 / CCUG 27074 / LMG 4051 / NBRC 15346 / NCIMB 9279 / VKM B-1422 / R1).